Consider the following 481-residue polypeptide: Tetratricopeptide repeat protein 29 (481 aa).

A compositionally biased stretch (low complexity) spans 1 to 18 (MASVGPVKTKTVTLKELT). Residues 1 to 53 (MASVGPVKTKTVTLKELTPPIPSPEKSACKGAKPDSNHMALVPVKPSQPGSGK) form a disordered region. TPR repeat units lie at residues 191–224 (CERC…AMES), 231–264 (QEVR…AMAL), 271–310 (VEAN…SQRV), 317–350 (ADSL…ARAA), 357–390 (KRAS…SEKA), and 397–430 (YRAT…ARKL).

Interacts with TAX-1.

It localises to the cytoplasm. The protein localises to the cytoskeleton. The protein resides in the flagellum axoneme. Its function is as follows. Axonemal protein which is implicated in axonemal and/or peri-axonemal structure assembly and regulates flagellum assembly and beating. In Trypanosoma brucei brucei (strain 927/4 GUTat10.1), this protein is Tetratricopeptide repeat protein 29.